We begin with the raw amino-acid sequence, 104 residues long: Cell division protein FtsL (104 aa).

Residues 1 to 19 (MSTPNTHLLCLIATDLRKH) are Cytoplasmic-facing. The helical transmembrane segment at 20–39 (FFAVLVGMLIVCSAIYNVYT) threads the bilayer. At 40–104 (THKTRGLVTQ…KKNSVLVELR (65 aa)) the chain is on the periplasmic side.

Belongs to the FtsL family. In terms of assembly, part of a complex composed of FtsB, FtsL and FtsQ.

The protein resides in the cell inner membrane. Essential cell division protein. May link together the upstream cell division proteins, which are predominantly cytoplasmic, with the downstream cell division proteins, which are predominantly periplasmic. The sequence is that of Cell division protein FtsL from Psychromonas ingrahamii (strain DSM 17664 / CCUG 51855 / 37).